The chain runs to 201 residues: Small ribosomal subunit protein uS5 (201 aa).

The tract at residues 1–28 (MAGPQRRGSGAGGGERRDRKGRDGGASA) is disordered. Residues 14-23 (GERRDRKGRD) show a composition bias toward basic and acidic residues. The S5 DRBM domain maps to 34–97 (YVERVVAINR…EEAKKNFFKV (64 aa)).

The protein belongs to the universal ribosomal protein uS5 family. In terms of assembly, part of the 30S ribosomal subunit. Contacts proteins S4 and S8.

Its function is as follows. With S4 and S12 plays an important role in translational accuracy. Located at the back of the 30S subunit body where it stabilizes the conformation of the head with respect to the body. This chain is Small ribosomal subunit protein uS5, found in Streptomyces griseus subsp. griseus (strain JCM 4626 / CBS 651.72 / NBRC 13350 / KCC S-0626 / ISP 5235).